A 775-amino-acid polypeptide reads, in one-letter code: 5-methyltetrahydropteroyltriglutamate--homocysteine methyltransferase (775 aa).

5-methyltetrahydropteroyltri-L-glutamate-binding positions include 16–19 (REMK) and Lys115. L-homocysteine is bound by residues 435 to 437 (IGS) and Glu488. Residues 435–437 (IGS) and Glu488 contribute to the L-methionine site. 5-methyltetrahydropteroyltri-L-glutamate contacts are provided by residues 519–520 (RC) and Trp565. Position 603 (Asp603) interacts with L-homocysteine. L-methionine is bound at residue Asp603. A 5-methyltetrahydropteroyltri-L-glutamate-binding site is contributed by Glu609. Zn(2+)-binding residues include His645, Cys647, and Glu669. His698 acts as the Proton donor in catalysis. Cys730 contacts Zn(2+).

This sequence belongs to the vitamin-B12 independent methionine synthase family. The cofactor is Zn(2+).

The catalysed reaction is 5-methyltetrahydropteroyltri-L-glutamate + L-homocysteine = tetrahydropteroyltri-L-glutamate + L-methionine. It functions in the pathway amino-acid biosynthesis; L-methionine biosynthesis via de novo pathway; L-methionine from L-homocysteine (MetE route): step 1/1. In terms of biological role, catalyzes the transfer of a methyl group from 5-methyltetrahydrofolate to homocysteine resulting in methionine formation. The sequence is that of 5-methyltetrahydropteroyltriglutamate--homocysteine methyltransferase from Coxiella burnetii (strain RSA 331 / Henzerling II).